Reading from the N-terminus, the 376-residue chain is Putative F-box only protein 9 (376 aa).

The region spanning 1 to 44 (MSDLPPDLVEDILSRVPATSLKRLRFTCKQWNSLFKNRRFTEKH) is the F-box domain.

This Arabidopsis thaliana (Mouse-ear cress) protein is Putative F-box only protein 9 (FBX9).